A 2230-amino-acid polypeptide reads, in one-letter code: Probable serine/threonine-protein kinase DDB_G0267686 (2230 aa).

The segment covering 1-12 (MEPNNNISNSNN) has biased composition (low complexity). Disordered stretches follow at residues 1-22 (MEPN…GDGK), 121-152 (NNNS…QLNN), 270-352 (DEKE…DKIS), 368-397 (PIIN…RLSS), 430-451 (NGAS…ILST), 464-574 (KNSS…NSPS), 593-620 (GSGS…NSST), 699-849 (QHQQ…LLPS), and 915-974 (SNQI…SSNS). Residues 270-336 (DEKENKEGGQ…NENEKNHNDK (67 aa)) are compositionally biased toward basic and acidic residues. The span at 337–346 (NDDDDDDEDN) shows a compositional bias: acidic residues. Low complexity-rich tracts occupy residues 375 to 388 (SSSN…NNSI), 430 to 447 (NGAS…GPTP), 473 to 574 (NNNN…NSPS), 593 to 602 (GSGSSSLGKG), 610 to 619 (SYSNNNNNSS), and 699 to 721 (QHQQ…QQQL). Over residues 722-731 (KSRSNTTNTP) the composition is skewed to polar residues. Positions 745–754 (NSPPVSPPSS) are enriched in pro residues. 2 stretches are compositionally biased toward low complexity: residues 755–766 (PMLSPLSSSPPS) and 783–818 (TGSL…RSNS). The span at 840–849 (YNTTPPLLPS) shows a compositional bias: polar residues. Residues 991–1119 (SLSALMKDRI…CILHSTTNGT (129 aa)) enclose the RGS domain. Disordered stretches follow at residues 1146–1181 (SKET…INNN), 1220–1243 (KLSH…NQPL), 1300–1362 (LSPP…GDQT), 1506–1546 (QQQQ…QPQQ), 1563–1611 (PTIP…NNNS), 1725–1771 (VSNN…NNGN), 1802–1848 (NNLM…NNNH), and 1905–1929 (ENNT…TISQ). Composition is skewed to low complexity over residues 1149-1181 (TSNS…INNN) and 1222-1239 (SHSN…SYTS). The segment covering 1324 to 1353 (TNGSMKSSLFQQQLQPTGSINSSPINNHQV) has biased composition (polar residues). Composition is skewed to low complexity over residues 1506-1520 (QQQQ…QFQP) and 1530-1546 (PSSN…QPQQ). A compositionally biased stretch (low complexity) spans 1726–1769 (SNNNNINSNNNNNNNNNNNNNNNNNNNNNNNNNNNNNNNSNNNN). Over residues 1905–1915 (ENNTTTTTTTT) the composition is skewed to low complexity. Residues 1916–1929 (SNRPFRSNNPTISQ) are compositionally biased toward polar residues. The 260-residue stretch at 1949-2208 (IVFLNKLGEG…SCPEILDSLL (260 aa)) folds into the Protein kinase domain. Residues 1955-1963 (LGEGTSAKV) and Lys-1976 each bind ATP. Asp-2069 serves as the catalytic Proton acceptor.

This sequence belongs to the protein kinase superfamily. TKL Ser/Thr protein kinase family.

It catalyses the reaction L-seryl-[protein] + ATP = O-phospho-L-seryl-[protein] + ADP + H(+). It carries out the reaction L-threonyl-[protein] + ATP = O-phospho-L-threonyl-[protein] + ADP + H(+). The chain is Probable serine/threonine-protein kinase DDB_G0267686 from Dictyostelium discoideum (Social amoeba).